The sequence spans 934 residues: Bifunctional uridylyltransferase/uridylyl-removing enzyme (934 aa).

A uridylyltransferase region spans residues Met-1 to Ser-379. A uridylyl-removing region spans residues Asp-380–Thr-736. The region spanning Val-496–Met-613 is the HD domain. 2 consecutive ACT domains span residues Glu-737–Ala-818 and Val-848–Gln-931.

It belongs to the GlnD family. It depends on Mg(2+) as a cofactor.

The catalysed reaction is [protein-PII]-L-tyrosine + UTP = [protein-PII]-uridylyl-L-tyrosine + diphosphate. The enzyme catalyses [protein-PII]-uridylyl-L-tyrosine + H2O = [protein-PII]-L-tyrosine + UMP + H(+). With respect to regulation, uridylyltransferase (UTase) activity is inhibited by glutamine, while glutamine activates uridylyl-removing (UR) activity. Modifies, by uridylylation and deuridylylation, the PII regulatory proteins (GlnB and homologs), in response to the nitrogen status of the cell that GlnD senses through the glutamine level. Under low glutamine levels, catalyzes the conversion of the PII proteins and UTP to PII-UMP and PPi, while under higher glutamine levels, GlnD hydrolyzes PII-UMP to PII and UMP (deuridylylation). Thus, controls uridylylation state and activity of the PII proteins, and plays an important role in the regulation of nitrogen assimilation and metabolism. This chain is Bifunctional uridylyltransferase/uridylyl-removing enzyme, found in Brucella suis (strain ATCC 23445 / NCTC 10510).